An 89-amino-acid chain; its full sequence is UPF0223 protein BcerKBAB4_3787 (89 aa).

The protein belongs to the UPF0223 family.

The chain is UPF0223 protein BcerKBAB4_3787 from Bacillus mycoides (strain KBAB4) (Bacillus weihenstephanensis).